A 425-amino-acid chain; its full sequence is 3-phosphoshikimate 1-carboxyvinyltransferase (425 aa).

Lysine 21, serine 22, and arginine 26 together coordinate 3-phosphoshikimate. Residue lysine 21 coordinates phosphoenolpyruvate. Phosphoenolpyruvate-binding residues include glycine 91 and arginine 119. Residues serine 164, glutamine 166, aspartate 311, and lysine 338 each contribute to the 3-phosphoshikimate site. Glutamine 166 is a binding site for phosphoenolpyruvate. Aspartate 311 serves as the catalytic Proton acceptor. Positions 342 and 383 each coordinate phosphoenolpyruvate.

This sequence belongs to the EPSP synthase family. Monomer.

The protein resides in the cytoplasm. The catalysed reaction is 3-phosphoshikimate + phosphoenolpyruvate = 5-O-(1-carboxyvinyl)-3-phosphoshikimate + phosphate. It functions in the pathway metabolic intermediate biosynthesis; chorismate biosynthesis; chorismate from D-erythrose 4-phosphate and phosphoenolpyruvate: step 6/7. Catalyzes the transfer of the enolpyruvyl moiety of phosphoenolpyruvate (PEP) to the 5-hydroxyl of shikimate-3-phosphate (S3P) to produce enolpyruvyl shikimate-3-phosphate and inorganic phosphate. This Campylobacter fetus subsp. fetus (strain 82-40) protein is 3-phosphoshikimate 1-carboxyvinyltransferase.